The chain runs to 20 residues: Protein YfiS (20 aa).

The sequence is that of Protein YfiS from Escherichia coli (strain K12).